The sequence spans 221 residues: UPF0319 protein NTHI1987 (221 aa).

An N-terminal signal peptide occupies residues 1–21; it reads MKLRAVVLGLATLCTSTATFA.

The protein belongs to the UPF0319 family.

This Haemophilus influenzae (strain 86-028NP) protein is UPF0319 protein NTHI1987.